The sequence spans 200 residues: GTP cyclohydrolase-2 (200 aa).

GTP is bound at residue 50–54 (RVHSE). Cys55, Cys66, and Cys68 together coordinate Zn(2+). GTP-binding positions include Gln71, 93–95 (EGR), and Thr115. The Proton acceptor role is filled by Asp127. Arg129 functions as the Nucleophile in the catalytic mechanism. 2 residues coordinate GTP: Thr150 and Lys155.

The protein belongs to the GTP cyclohydrolase II family. It depends on Zn(2+) as a cofactor.

It carries out the reaction GTP + 4 H2O = 2,5-diamino-6-hydroxy-4-(5-phosphoribosylamino)-pyrimidine + formate + 2 phosphate + 3 H(+). It participates in cofactor biosynthesis; riboflavin biosynthesis; 5-amino-6-(D-ribitylamino)uracil from GTP: step 1/4. Functionally, catalyzes the conversion of GTP to 2,5-diamino-6-ribosylamino-4(3H)-pyrimidinone 5'-phosphate (DARP), formate and pyrophosphate. In Acinetobacter baumannii (strain AB0057), this protein is GTP cyclohydrolase-2.